The following is a 275-amino-acid chain: uncharacterized protein (275 aa).

The stretch at 75–157 forms a coiled coil; sequence AKELIKNRRL…AELKQAAEQG (83 aa).

This is an uncharacterized protein from Bacillus subtilis (strain 168).